Reading from the N-terminus, the 89-residue chain is Small ribosomal subunit protein uS15 (89 aa).

The protein belongs to the universal ribosomal protein uS15 family. As to quaternary structure, part of the 30S ribosomal subunit. Forms a bridge to the 50S subunit in the 70S ribosome, contacting the 23S rRNA.

In terms of biological role, one of the primary rRNA binding proteins, it binds directly to 16S rRNA where it helps nucleate assembly of the platform of the 30S subunit by binding and bridging several RNA helices of the 16S rRNA. Forms an intersubunit bridge (bridge B4) with the 23S rRNA of the 50S subunit in the ribosome. This chain is Small ribosomal subunit protein uS15, found in Pediococcus pentosaceus (strain ATCC 25745 / CCUG 21536 / LMG 10740 / 183-1w).